We begin with the raw amino-acid sequence, 335 residues long: NADH-quinone oxidoreductase subunit H (335 aa).

Helical transmembrane passes span 11–31 (VILT…CGAL), 81–101 (MIFT…FVVI), 114–134 (IGLL…LFAG), 154–174 (VSYE…VGSF), 187–207 (LWFI…GVAV), 238–258 (FFVG…TLFF), 270–290 (QVPF…FILL), and 307–327 (WKFC…VVLY).

The protein belongs to the complex I subunit 1 family. In terms of assembly, NDH-1 is composed of 13 different subunits. Subunits NuoA, H, J, K, L, M, N constitute the membrane sector of the complex.

Its subcellular location is the cell inner membrane. The enzyme catalyses a quinone + NADH + 5 H(+)(in) = a quinol + NAD(+) + 4 H(+)(out). Its function is as follows. NDH-1 shuttles electrons from NADH, via FMN and iron-sulfur (Fe-S) centers, to quinones in the respiratory chain. The immediate electron acceptor for the enzyme in this species is believed to be ubiquinone. Couples the redox reaction to proton translocation (for every two electrons transferred, four hydrogen ions are translocated across the cytoplasmic membrane), and thus conserves the redox energy in a proton gradient. This subunit may bind ubiquinone. This chain is NADH-quinone oxidoreductase subunit H, found in Pseudomonas entomophila (strain L48).